The following is a 576-amino-acid chain: Arginine--tRNA ligase (576 aa).

Positions 132–142 (ANPTGPMHIGH) match the 'HIGH' region motif.

Belongs to the class-I aminoacyl-tRNA synthetase family. As to quaternary structure, monomer.

The protein localises to the cytoplasm. The enzyme catalyses tRNA(Arg) + L-arginine + ATP = L-arginyl-tRNA(Arg) + AMP + diphosphate. The chain is Arginine--tRNA ligase from Ehrlichia ruminantium (strain Gardel).